Reading from the N-terminus, the 199-residue chain is Pyridoxine/pyridoxamine 5'-phosphate oxidase (199 aa).

FMN-binding positions include 44 to 49 (RTVLLK), 59 to 60 (YT), K66, and Q91. K49 contributes to the substrate binding site. Positions 109, 113, and 117 each coordinate substrate. Residues 126–127 (QS) and W171 each bind FMN. 177-179 (RLH) is a substrate binding site. R181 serves as a coordination point for FMN.

It belongs to the pyridoxamine 5'-phosphate oxidase family. In terms of assembly, homodimer. FMN is required as a cofactor.

It carries out the reaction pyridoxamine 5'-phosphate + O2 + H2O = pyridoxal 5'-phosphate + H2O2 + NH4(+). The enzyme catalyses pyridoxine 5'-phosphate + O2 = pyridoxal 5'-phosphate + H2O2. It participates in cofactor metabolism; pyridoxal 5'-phosphate salvage; pyridoxal 5'-phosphate from pyridoxamine 5'-phosphate: step 1/1. Its pathway is cofactor metabolism; pyridoxal 5'-phosphate salvage; pyridoxal 5'-phosphate from pyridoxine 5'-phosphate: step 1/1. Catalyzes the oxidation of either pyridoxine 5'-phosphate (PNP) or pyridoxamine 5'-phosphate (PMP) into pyridoxal 5'-phosphate (PLP). The polypeptide is Pyridoxine/pyridoxamine 5'-phosphate oxidase (Xanthomonas campestris pv. campestris (strain 8004)).